The following is a 742-amino-acid chain: RING finger protein 145 homolog (742 aa).

11 helical membrane passes run 109–129 (AAIILSYFVIFISLMFLTLPL), 138–158 (HFLSVFLFGVAYKLSAIYVDL), 178–198 (HGFHFLAQMLLVVLQSMLLEV), 233–253 (ACTGTMIFIATYMLYRAPSLI), 285–305 (ILELLTFTWITMFLMVLYVEL), 318–338 (ILLTGVAETTNTPITLAALAV), 368–388 (SGYTEAVSVVILCIQTGFLGM), 395–415 (ILLALVLYIVISALLQSLFEI), 438–458 (ICIALLLVVIPFFTTKTMLAL), 463–483 (IYTAIIIANSATVTARAIGVI), and 533–553 (VKVGFSFATFAILLFHVIVNI). The RING-type; atypical zinc finger occupies 592–630 (CAICFIEMKEEARITPCKHYFHGPCLRKWLAVKMVCPLC). Disordered regions lie at residues 642–684 (KSSS…PGDM) and 722–742 (AYESDSDAGSEELVIEEENNN). A compositionally biased stretch (acidic residues) spans 659-672 (AAVEENPENPEEQP).

The protein resides in the membrane. The protein localises to the golgi apparatus. It localises to the cis-Golgi network. Its subcellular location is the trans-Golgi network. It carries out the reaction S-ubiquitinyl-[E2 ubiquitin-conjugating enzyme]-L-cysteine + [acceptor protein]-L-lysine = [E2 ubiquitin-conjugating enzyme]-L-cysteine + N(6)-ubiquitinyl-[acceptor protein]-L-lysine.. In terms of biological role, E3 ubiquitin ligase that catalyzes the direct transfer of ubiquitin from E2 ubiquitin-conjugating enzyme to a specific substrate. Acting downstream of probable Golgi transport protein eas-1, involved in inhibition of activation of transcription factor sbp-1, thereby playing a role in regulating AMsh glial cell size. The polypeptide is RING finger protein 145 homolog (Caenorhabditis elegans).